Reading from the N-terminus, the 126-residue chain is Aspartate 1-decarboxylase (126 aa).

Ser25 (schiff-base intermediate with substrate; via pyruvic acid) is an active-site residue. Ser25 is subject to Pyruvic acid (Ser). Residue Thr57 participates in substrate binding. The Proton donor role is filled by Tyr58. 73–75 lines the substrate pocket; the sequence is GGA.

It belongs to the PanD family. As to quaternary structure, heterooctamer of four alpha and four beta subunits. Requires pyruvate as cofactor. Is synthesized initially as an inactive proenzyme, which is activated by self-cleavage at a specific serine bond to produce a beta-subunit with a hydroxyl group at its C-terminus and an alpha-subunit with a pyruvoyl group at its N-terminus.

It localises to the cytoplasm. The enzyme catalyses L-aspartate + H(+) = beta-alanine + CO2. The protein operates within cofactor biosynthesis; (R)-pantothenate biosynthesis; beta-alanine from L-aspartate: step 1/1. Functionally, catalyzes the pyruvoyl-dependent decarboxylation of aspartate to produce beta-alanine. This chain is Aspartate 1-decarboxylase, found in Acinetobacter baylyi (strain ATCC 33305 / BD413 / ADP1).